Reading from the N-terminus, the 253-residue chain is HTH-type transcriptional regulator YdeO (253 aa).

The 97-residue stretch at 137 to 233 (GKVRNIVNMK…GNSPKRVSKE (97 aa)) folds into the HTH araC/xylS-type domain. 2 DNA-binding regions (H-T-H motif) span residues 154 to 175 (KDIC…KQEQ) and 200 to 223 (VNKI…RKHF).

Functionally, induces the expression of gadE. Could also regulate the expression of other genes involved in acid resistance. The protein is HTH-type transcriptional regulator YdeO (ydeO) of Shigella flexneri.